Reading from the N-terminus, the 639-residue chain is 1-deoxy-D-xylulose-5-phosphate synthase (639 aa).

Residues H79 and 120-122 (AHS) each bind thiamine diphosphate. D151 is a Mg(2+) binding site. Thiamine diphosphate is bound by residues 152–153 (GA), N180, Y289, and E371. Position 180 (N180) interacts with Mg(2+).

It belongs to the transketolase family. DXPS subfamily. As to quaternary structure, homodimer. Mg(2+) serves as cofactor. Requires thiamine diphosphate as cofactor.

It catalyses the reaction D-glyceraldehyde 3-phosphate + pyruvate + H(+) = 1-deoxy-D-xylulose 5-phosphate + CO2. It participates in metabolic intermediate biosynthesis; 1-deoxy-D-xylulose 5-phosphate biosynthesis; 1-deoxy-D-xylulose 5-phosphate from D-glyceraldehyde 3-phosphate and pyruvate: step 1/1. Catalyzes the acyloin condensation reaction between C atoms 2 and 3 of pyruvate and glyceraldehyde 3-phosphate to yield 1-deoxy-D-xylulose-5-phosphate (DXP). This is 1-deoxy-D-xylulose-5-phosphate synthase from Rhizorhabdus wittichii (strain DSM 6014 / CCUG 31198 / JCM 15750 / NBRC 105917 / EY 4224 / RW1) (Sphingomonas wittichii).